A 361-amino-acid chain; its full sequence is tRNA N6-adenosine threonylcarbamoyltransferase (361 aa).

Positions 110 and 114 each coordinate Fe cation. Substrate-binding positions include 132-136 (LVSGG), Asp165, Gly178, Asp182, and Asn289. Asp317 contributes to the Fe cation binding site.

Belongs to the KAE1 / TsaD family. Fe(2+) is required as a cofactor.

The protein localises to the cytoplasm. It catalyses the reaction L-threonylcarbamoyladenylate + adenosine(37) in tRNA = N(6)-L-threonylcarbamoyladenosine(37) in tRNA + AMP + H(+). Required for the formation of a threonylcarbamoyl group on adenosine at position 37 (t(6)A37) in tRNAs that read codons beginning with adenine. Is involved in the transfer of the threonylcarbamoyl moiety of threonylcarbamoyl-AMP (TC-AMP) to the N6 group of A37, together with TsaE and TsaB. TsaD likely plays a direct catalytic role in this reaction. The chain is tRNA N6-adenosine threonylcarbamoyltransferase from Nitratidesulfovibrio vulgaris (strain ATCC 29579 / DSM 644 / CCUG 34227 / NCIMB 8303 / VKM B-1760 / Hildenborough) (Desulfovibrio vulgaris).